Reading from the N-terminus, the 912-residue chain is Glutamate receptor 3.2 (912 aa).

An N-terminal signal peptide occupies residues M1–G22. At A23 to T587 the chain is on the extracellular side. N-linked (GlcNAc...) asparagine glycosylation is found at N306, N338, N378, N417, N435, N445, and N532. Glycine is bound by residues D544–A546 and R551. L-methionine-binding positions include D544–A546 and R551. The helical transmembrane segment at P588–L608 threads the bilayer. Residues E609–R617 lie on the Cytoplasmic side of the membrane. A helical transmembrane segment spans residues G618–S638. Residues H639 to R649 are Cytoplasmic-facing. A helical membrane pass occupies residues A650–L670. The Extracellular portion of the chain corresponds to T671 to S828. Residue Y703 coordinates glycine. Y703 lines the L-methionine pocket. N734 is a glycosylation site (N-linked (GlcNAc...) asparagine). Glycine is bound at residue E743–Y746. Residue E743–Y746 coordinates L-methionine. An intrachain disulfide couples C755 to C809. Residues N808 and N813 are each glycosylated (N-linked (GlcNAc...) asparagine). Residues F829 to F849 traverse the membrane as a helical segment. The Cytoplasmic segment spans residues K850–I912. Positions K888–I912 are disordered.

Belongs to the glutamate-gated ion channel (TC 1.A.10.1) family. As to quaternary structure, forms a heteromeric channel with GLR3.4. As to expression, expressed in leaves and siliques, and at lower level in flowers and roots. Detected in the vascular tissues of both shoots and roots. Expressed in root phloem.

It is found in the cell membrane. Functionally, glutamate-gated receptor that probably acts as a non-selective cation channel. May be involved in light-signal transduction and calcium homeostasis via the regulation of calcium influx into cells. Could play a role in calcium unloading from the xylem vessels. Acts as a negative regulator of lateral root initiation and development. May restrict primordia numbers and position along the root axis by a signaling process originating in the phloem. In Arabidopsis thaliana (Mouse-ear cress), this protein is Glutamate receptor 3.2.